Here is a 392-residue protein sequence, read N- to C-terminus: MIDEKDKPYLEEKVKQASNILPQKIVDDLKNLILNKEIIVTRDEIDKIFDLAIKEYSEGLIAPGEAIGIVAAQSVGEPGTQMTLRTFHFAGIRELNVTLGLPRLIEIVDAKKVPSTPMMTIYLTDEYKRDRDKALEVARKLEYTKIENVVSSTSIDIASMSIILQLDNEMLKDKGVTVDDVKKAIGRLKLGDFMIEESEDSTLNINFANIDSIAALFKLRDKILNTKIKGIKGIKRAIVQKKGDEYIILTDGSNLSGVLSVKGVDVAKVETNNIREIEEVFGIEAAREIIIREISKVLAEQGLDVDIRHILLIADVMTRTGIVRQIGRHGVTGEKNSVLARAAFEVTVKHLLDAAARGDVEEFKGVVENIIIGHPIKLGTGMVELTMRPILR.

This sequence belongs to the RNA polymerase beta' chain family. As to quaternary structure, part of the 13-subunit RNA polymerase complex.

It is found in the cytoplasm. The enzyme catalyses RNA(n) + a ribonucleoside 5'-triphosphate = RNA(n+1) + diphosphate. Its function is as follows. DNA-dependent RNA polymerase (RNAP) catalyzes the transcription of DNA into RNA using the four ribonucleoside triphosphates as substrates. Forms part of the jaw domain. This chain is DNA-directed RNA polymerase subunit Rpo1C, found in Saccharolobus solfataricus (strain ATCC 35092 / DSM 1617 / JCM 11322 / P2) (Sulfolobus solfataricus).